Here is a 156-residue protein sequence, read N- to C-terminus: MPRKGPAPSRPLVNDPVYGSQLVTQLVNKVLLDGKKSIAERIVYGALEQARDKTGTDPVVTLKRAMDNVKPALEVRSRRVGGATYQVPVEVRPDRSTTLALRWLVTFSRARREKTMVERLANEILDASNGLGASVKRREDTHKMAEANRAFAHYRW.

The protein belongs to the universal ribosomal protein uS7 family. Part of the 30S ribosomal subunit. Contacts proteins S9 and S11.

Functionally, one of the primary rRNA binding proteins, it binds directly to 16S rRNA where it nucleates assembly of the head domain of the 30S subunit. Is located at the subunit interface close to the decoding center, probably blocks exit of the E-site tRNA. The sequence is that of Small ribosomal subunit protein uS7 from Mycobacteroides abscessus (strain ATCC 19977 / DSM 44196 / CCUG 20993 / CIP 104536 / JCM 13569 / NCTC 13031 / TMC 1543 / L948) (Mycobacterium abscessus).